Consider the following 208-residue polypeptide: LexA repressor (208 aa).

Residues 29–49 (VREICSAVGLSSTSTVHGHIS) constitute a DNA-binding region (H-T-H motif). Residues Ser-129 and Lys-167 each act as for autocatalytic cleavage activity in the active site.

It belongs to the peptidase S24 family. Homodimer.

It carries out the reaction Hydrolysis of Ala-|-Gly bond in repressor LexA.. In terms of biological role, represses a number of genes involved in the response to DNA damage (SOS response), including recA and lexA. In the presence of single-stranded DNA, RecA interacts with LexA causing an autocatalytic cleavage which disrupts the DNA-binding part of LexA, leading to derepression of the SOS regulon and eventually DNA repair. In Limosilactobacillus reuteri (strain DSM 20016) (Lactobacillus reuteri), this protein is LexA repressor.